Here is a 433-residue protein sequence, read N- to C-terminus: MIKLEMDFVLSEKLWKEAQEIFPGGVNSPVRSFQSVGGFPFYVSRAKGSKITDVDGNDYTDYVCSWGALIHGHAHPAVVRAVGEALKDGTSYGANSPLEIKLARLIQSAMPSIEKIRFVNSGTEACMTAIRIARGVSGREKIMKFEGCYHGHSDSLLVKAGSGALTTAVPNSAGIPPCLSSLTLVLPWNDRQTLLEAFKRQGKETAAVILEPVLANCGLIPPEEGFLECLFKTAREYGTLVIFDEVITGFRLALGGAQEIFGIQPDLTVLGKIIGGGLPVGAVGGKKEIMDSLSPLGSVYQAGTLSGNPLAMAAGIAQLEQIKKAPPYSHLETLGSELESAIKDIQRKLPIPFQFNRRGSLFSFFFTAKNIRSATDVYSVDKKRFSCFFTSLLHSGIFLPPSPFETAFLSTAHSETDIDELVKFVYDILKKMP.

Lys-272 carries the N6-(pyridoxal phosphate)lysine modification.

Belongs to the class-III pyridoxal-phosphate-dependent aminotransferase family. HemL subfamily. Homodimer. Pyridoxal 5'-phosphate serves as cofactor.

It localises to the cytoplasm. The catalysed reaction is (S)-4-amino-5-oxopentanoate = 5-aminolevulinate. Its pathway is porphyrin-containing compound metabolism; protoporphyrin-IX biosynthesis; 5-aminolevulinate from L-glutamyl-tRNA(Glu): step 2/2. The polypeptide is Glutamate-1-semialdehyde 2,1-aminomutase (Methylacidiphilum infernorum (isolate V4) (Methylokorus infernorum (strain V4))).